A 673-amino-acid chain; its full sequence is ATP-dependent DNA helicase Rep (673 aa).

The region spanning 1–280 (MRLNPGQQQA…IKLEQNYRSS (280 aa)) is the UvrD-like helicase ATP-binding domain. ATP is bound by residues 22-29 (AGAGSGKT) and R278. Positions 281–562 (GRILKAANIL…QLMTLHASKG (282 aa)) constitute a UvrD-like helicase C-terminal domain.

The protein belongs to the helicase family. UvrD subfamily. Homodimer in association with DNA.

It carries out the reaction Couples ATP hydrolysis with the unwinding of duplex DNA by translocating in the 3'-5' direction.. It catalyses the reaction ATP + H2O = ADP + phosphate + H(+). Binding to DNA induces dimerization, which is required for DNA helicase activity. Helicase activity is stimulated by PriC. Its function is as follows. Rep helicase is a single-stranded (ss)DNA-dependent ATPase involved in DNA replication; it can initiate unwinding at a nick in the DNA. It binds to ssDNA and acts in a progressive fashion along the DNA in the 3' to 5' direction. Binds double-stranded (ds)DNA with a 5' ss- but not 3' ss-extension and forked structures with either lagging or leading ssDNA. Part of the PriC-Rep pathway for restart of stalled replication forks, which reloads the DnaB replicative helicase on sites other than the origin of replication. This chain is ATP-dependent DNA helicase Rep, found in Escherichia coli (strain K12).